Reading from the N-terminus, the 312-residue chain is Tetraacyldisaccharide 4'-kinase (312 aa).

Position 60–67 (60–67) interacts with ATP; that stretch reads IAGGSGKT.

It belongs to the LpxK family.

The catalysed reaction is a lipid A disaccharide + ATP = a lipid IVA + ADP + H(+). It participates in glycolipid biosynthesis; lipid IV(A) biosynthesis; lipid IV(A) from (3R)-3-hydroxytetradecanoyl-[acyl-carrier-protein] and UDP-N-acetyl-alpha-D-glucosamine: step 6/6. Functionally, transfers the gamma-phosphate of ATP to the 4'-position of a tetraacyldisaccharide 1-phosphate intermediate (termed DS-1-P) to form tetraacyldisaccharide 1,4'-bis-phosphate (lipid IVA). The protein is Tetraacyldisaccharide 4'-kinase of Helicobacter pylori (strain HPAG1).